We begin with the raw amino-acid sequence, 316 residues long: Ornithine carbamoyltransferase (316 aa).

Residues 57-60, Q84, R108, and 135-138 each bind carbamoyl phosphate; these read STRT and HPCQ. L-ornithine is bound by residues N166, D230, and 234-235; that span reads SM. Carbamoyl phosphate contacts are provided by residues 269-270 and R297; that span reads CL.

This sequence belongs to the aspartate/ornithine carbamoyltransferase superfamily. OTCase family.

Its subcellular location is the cytoplasm. The catalysed reaction is carbamoyl phosphate + L-ornithine = L-citrulline + phosphate + H(+). The protein operates within amino-acid biosynthesis; L-arginine biosynthesis; L-arginine from L-ornithine and carbamoyl phosphate: step 1/3. Its function is as follows. Reversibly catalyzes the transfer of the carbamoyl group from carbamoyl phosphate (CP) to the N(epsilon) atom of ornithine (ORN) to produce L-citrulline. The protein is Ornithine carbamoyltransferase (argF) of Bacillus cereus (strain ATCC 14579 / DSM 31 / CCUG 7414 / JCM 2152 / NBRC 15305 / NCIMB 9373 / NCTC 2599 / NRRL B-3711).